Reading from the N-terminus, the 354-residue chain is Trans-L-3-hydroxyproline dehydratase (354 aa).

The Proton acceptor role is filled by cysteine 104. Residues 105-106, aspartate 269, and 274-275 contribute to the substrate site; these read GH and GS.

Belongs to the proline racemase family. In terms of assembly, homodimer.

It carries out the reaction trans-3-hydroxy-L-proline = 1-pyrroline-2-carboxylate + H2O. Functionally, catalyzes the dehydration of trans-3-hydroxy-L-proline to Delta(1)-pyrroline-2-carboxylate (Pyr2C). This Bos taurus (Bovine) protein is Trans-L-3-hydroxyproline dehydratase (L3HYPDH).